Consider the following 508-residue polypeptide: Gasdermin-C (508 aa).

A triggers pyroptosis region spans residues 1–257 (MPSMLERISK…VGYCAARSEG (257 aa)).

Belongs to the gasdermin family. Homooligomer; homooligomeric ring-shaped pore complex containing 27-28 subunits when inserted in the membrane. Cleavage by CASP8 relieves autoinhibition by releasing the N-terminal moiety (Gasdermin-C, N-terminal) that initiates pyroptosis. The cleavage site is unclear. According to a publication, it takes place after Asp-240 in response to alpha-ketoglutarate. Another paper reports cleavage by CASP8 after Asp-365. Post-translationally, palmitoylated. In terms of tissue distribution, expressed mainly in trachea and spleen. In the esophagus, expressed in differentiating cells and probably in differentiated cells. Also detected in gastric epithelium.

It localises to the cytoplasm. The protein localises to the cytosol. Its subcellular location is the cell membrane. With respect to regulation, the full-length protein before cleavage is inactive: intramolecular interactions between N- and C-terminal domains mediate autoinhibition in the absence of activation signal. The intrinsic pyroptosis-inducing activity is carried by the released N-terminal moiety (Gasdermin-C, N-terminal) following cleavage by caspase CASP8. Its function is as follows. This form constitutes the precursor of the pore-forming protein: upon cleavage, the released N-terminal moiety (Gasdermin-C, N-terminal) binds to membranes and forms pores, triggering pyroptosis. Pore-forming protein that causes membrane permeabilization and pyroptosis. Produced by the cleavage of gasdermin-C by caspase CASP8 in response to death signals. After cleavage, moves to the plasma membrane where it strongly binds to membrane inner leaflet lipids. Homooligomerizes within the membrane and forms pores of 10-15 nanometers (nm) of inner diameter, triggering pyroptosis. The sequence is that of Gasdermin-C from Homo sapiens (Human).